The sequence spans 27 residues: Potassium channel toxin kappa-KTx 2.2 (27 aa).

Disulfide bonds link cysteine 3–cysteine 21 and cysteine 7–cysteine 17.

It belongs to the short scorpion toxin superfamily. Potassium channel inhibitor kappa-KTx family. Kappa-KTx 2 subfamily. In terms of tissue distribution, expressed by the venom gland.

Its subcellular location is the secreted. Functionally, omTx1 decreases the amplitude of the potassium current of the rat channels Kv1.1/KCNA1 by 17% and Kv1.2/KCNA2 by 12% as well as human Kv1.3/KCNA3 by 24%. In terms of biological role, omTx2 decreases the amplitude of the potassium current of the rat channels Kv1.1/KCNA1 by 8% and Kv1.2/KCNA2 by 10% as well as human Kv1.3/KCNA3 by 36%. Also alters glucose-induced insulin release from pancreatic islets. The protein is Potassium channel toxin kappa-KTx 2.2 of Opisthacanthus madagascariensis (Scorpion).